Reading from the N-terminus, the 196-residue chain is Glycerol-3-phosphate acyltransferase (196 aa).

Transmembrane regions (helical) follow at residues Met1–Gly21, Ile55–Thr75, Pro81–Phe101, Ala118–Phe138, and Tyr140–Gln160.

The protein belongs to the PlsY family. As to quaternary structure, probably interacts with PlsX.

It is found in the cell inner membrane. It catalyses the reaction an acyl phosphate + sn-glycerol 3-phosphate = a 1-acyl-sn-glycero-3-phosphate + phosphate. Its pathway is lipid metabolism; phospholipid metabolism. Functionally, catalyzes the transfer of an acyl group from acyl-phosphate (acyl-PO(4)) to glycerol-3-phosphate (G3P) to form lysophosphatidic acid (LPA). This enzyme utilizes acyl-phosphate as fatty acyl donor, but not acyl-CoA or acyl-ACP. The sequence is that of Glycerol-3-phosphate acyltransferase from Blochmanniella floridana.